The chain runs to 226 residues: SPI-1 type 3 secretion system stator protein (226 aa).

The core secretion machinery of the T3SS is composed of approximately 20 different proteins, including cytoplasmic components, a base, an export apparatus and a needle. This subunit is part of the cytosolic complex. Interacts directly with InvC/SctN1 (T3SS-1 ATPase) and SpaO/SctQ (the major sorting platform component).

It is found in the cytoplasm. Functionally, component of the type III secretion system (T3SS), also called injectisome, which is used to inject bacterial effector proteins into eukaryotic host cells. Acts as a regulator of the InvC/SctN1 ATPase activity. Required for invasion and secretion. The polypeptide is SPI-1 type 3 secretion system stator protein (Salmonella typhimurium (strain SL1344)).